A 498-amino-acid polypeptide reads, in one-letter code: Tryptophan decarboxylase TDC2 (498 aa).

K316 is subject to N6-(pyridoxal phosphate)lysine.

The protein belongs to the group II decarboxylase family. It depends on pyridoxal 5'-phosphate as a cofactor.

It carries out the reaction L-tryptophan + H(+) = tryptamine + CO2. Functionally, involved in the biosynthesis of tryptamine. Supplies tryptamine for the indole moiety of camptothecin (CPT), an anti-cancer monoterpene alkaloid. Represents a key step in monoterpene indole alkaloid biosynthesis. Is specific for tryptophan, and inactive against tyrosine, phenylalanine and 3,4-dihydroxyphenylalanine (dopa). The protein is Tryptophan decarboxylase TDC2 of Camptotheca acuminata (Happy tree).